A 298-amino-acid polypeptide reads, in one-letter code: Glycine--tRNA ligase alpha subunit (298 aa).

It belongs to the class-II aminoacyl-tRNA synthetase family. In terms of assembly, tetramer of two alpha and two beta subunits.

Its subcellular location is the cytoplasm. The enzyme catalyses tRNA(Gly) + glycine + ATP = glycyl-tRNA(Gly) + AMP + diphosphate. The polypeptide is Glycine--tRNA ligase alpha subunit (Helicobacter hepaticus (strain ATCC 51449 / 3B1)).